The chain runs to 396 residues: tRNA (guanine-N(7)-)-methyltransferase non-catalytic subunit wuho (396 aa).

4 WD repeats span residues 75–115 (KVEV…AQLL), 162–201 (GHLS…DIHS), 205–243 (GHKE…ELLL), and 302–342 (AGTW…RASG).

Belongs to the WD repeat TRM82 family. As to quaternary structure, forms a heterodimer with the catalytic subunit Mettl1. Interacts with mei-P26 and weakly interacts with bgcn; required for the function or formation of the mei-P26-bgcn-bam-sxl complex. Interacts with nanos; may be involved in mei-P26-dependent derepression of the BMP signaling pathway. Interacts with Myc; the interaction may be mediated by mei-P26 and may be involved in the regulation of ribosome biogenesis. In testis, it is present at high level in hub cells, a niche for germline stem cells of testis. Ubiquitously expressed in all testicular cells throughout spermatogenesis. Ubiquitously expressed in all germline and somatic cells of the ovary.

The protein resides in the nucleus. Its subcellular location is the cytoplasm. Its pathway is tRNA modification; N(7)-methylguanine-tRNA biosynthesis. Required for the Mettl1-dependent formation of N(7)-methylguanine at position 46 (m7G46) in tRNA. In the Mettl1-wuho methyltransferase complex, it is required to stabilize and induce conformational changes of the catalytic subunit. Required for binding of nanos mRNA and repression of translation by the mei-P26-bgcn-bam-sxl complex. May cooperate with mei-P26 and nanos to derepress the BMP signaling pathway. May cooperate with mei-P26 to suppress expression of a subset of microRNAs. May cooperate with mei-P26 to regulate bam expression levels in germline cells during gametogenesis. Required to promote mitosis to meiosis transition during gametogenesis. May regulate germline cell division in part by regulating ribosome biogenesis. This is tRNA (guanine-N(7)-)-methyltransferase non-catalytic subunit wuho from Drosophila pseudoobscura pseudoobscura (Fruit fly).